Consider the following 340-residue polypeptide: MSDINDISSYDYFLPEMLIAKEPVLPKEEARLLVYLKKTKEIKHYKFKDLASLIPDDAAVIFNNTKVIKARILGHKQSGGACEVMLNQPLGDNKFSVYVRGRVSVGSVLNFADDIKVNVLELNDDGSRVVNFTKNGVILDTAQLFSELEKIGHVPLPPYIKRADTKDDESWYQSIFAKNSGAVAAPTASLHFSEQMLERIKAKHDIAYITLHVGAGTFKGVECQNINDHKMHSEFYELSEKAQEIISSNKPILGVGTTVTRCVEEFARSKQSSGFCKLFLNLNNKPIRQNYLLTNFHLPKSTLIMLVTSFIGLEETMRIYETAVSEKYRFYSYGDGMLVI.

This sequence belongs to the QueA family. In terms of assembly, monomer.

It is found in the cytoplasm. The enzyme catalyses 7-aminomethyl-7-carbaguanosine(34) in tRNA + S-adenosyl-L-methionine = epoxyqueuosine(34) in tRNA + adenine + L-methionine + 2 H(+). The protein operates within tRNA modification; tRNA-queuosine biosynthesis. Functionally, transfers and isomerizes the ribose moiety from AdoMet to the 7-aminomethyl group of 7-deazaguanine (preQ1-tRNA) to give epoxyqueuosine (oQ-tRNA). The sequence is that of S-adenosylmethionine:tRNA ribosyltransferase-isomerase from Campylobacter concisus (strain 13826).